We begin with the raw amino-acid sequence, 1168 residues long: ATP-dependent DNA helicase mph1 (1168 aa).

Polar residues-rich tracts occupy residues 24 to 38 (NITS…QLAS) and 59 to 68 (PTVSQGQATA). A disordered region spans residues 24–132 (NITSHHPSNS…PFRADMPPEQ (109 aa)). The segment covering 71 to 88 (RAKTASKPTTSATTSRPS) has biased composition (low complexity). Residues 89–104 (LAQSSQRKNLRQTTLW) show a composition bias toward polar residues. The region spanning 162–330 (IVKNGLFNNT…DVIDNLGISH (169 aa)) is the Helicase ATP-binding domain. 175–182 (LPTGLGKT) provides a ligand contact to ATP. The DEAH box signature appears at 278–281 (DEAH). In terms of domain architecture, Helicase C-terminal spans 506 to 665 (LVNHFMDAGE…GSRFTFRHDL (160 aa)). 2 disordered regions span residues 690–717 (SQNP…FNMP) and 830–1168 (APAN…DDQE). The span at 701-714 (SAARMRTKPAKKKF) shows a compositional bias: basic residues. A compositionally biased stretch (polar residues) spans 895–907 (TAKTKSTGVSKQT). Positions 920–936 (DCEEGGNEYDGNVDDDE) are enriched in acidic residues. Residues 941–959 (RNFRSKGRGRGSGRGKKSQ) are compositionally biased toward basic residues. Residues 985–996 (GSDDGADLEDFI) show a composition bias toward acidic residues. Positions 1001–1030 (EVTSSLQHRPRGSTSPTTAPDAGSSSLSSK) are enriched in polar residues.

The protein belongs to the DEAD box helicase family. DEAH subfamily. FANCM sub-subfamily. Interacts with the MHF histone-fold complex to form the FANCM-MHF complex.

It is found in the nucleus. It catalyses the reaction ATP + H2O = ADP + phosphate + H(+). In terms of biological role, ATP-dependent DNA helicase involved in DNA damage repair by homologous recombination and in genome maintenance. Capable of unwinding D-loops. Plays a role in limiting crossover recombinants during mitotic DNA double-strand break (DSB) repair. Component of a FANCM-MHF complex which promotes gene conversion at blocked replication forks, probably by reversal of the stalled fork. In Neurospora crassa (strain ATCC 24698 / 74-OR23-1A / CBS 708.71 / DSM 1257 / FGSC 987), this protein is ATP-dependent DNA helicase mph1.